Here is a 229-residue protein sequence, read N- to C-terminus: Cytidylate kinase (229 aa).

ATP is bound at residue 12-20; that stretch reads GPSGSGKGT.

The protein belongs to the cytidylate kinase family. Type 1 subfamily.

The protein resides in the cytoplasm. The enzyme catalyses CMP + ATP = CDP + ADP. The catalysed reaction is dCMP + ATP = dCDP + ADP. In Pseudomonas fluorescens (strain ATCC BAA-477 / NRRL B-23932 / Pf-5), this protein is Cytidylate kinase.